The chain runs to 159 residues: Lipoprotein signal peptidase (159 aa).

Transmembrane regions (helical) follow at residues P59–F79 and F87–L107. Catalysis depends on residues D113 and D139. Residues L131 to I151 form a helical membrane-spanning segment.

Belongs to the peptidase A8 family.

It is found in the cell inner membrane. The catalysed reaction is Release of signal peptides from bacterial membrane prolipoproteins. Hydrolyzes -Xaa-Yaa-Zaa-|-(S,diacylglyceryl)Cys-, in which Xaa is hydrophobic (preferably Leu), and Yaa (Ala or Ser) and Zaa (Gly or Ala) have small, neutral side chains.. The protein operates within protein modification; lipoprotein biosynthesis (signal peptide cleavage). Functionally, this protein specifically catalyzes the removal of signal peptides from prolipoproteins. The polypeptide is Lipoprotein signal peptidase (Chlorobium phaeobacteroides (strain BS1)).